We begin with the raw amino-acid sequence, 553 residues long: Protein PNS1 (553 aa).

The interval M1–Q53 is disordered. The Cytoplasmic segment spans residues M1–W94. The segment covering P25–G34 has biased composition (polar residues). Residues P95–L115 traverse the membrane as a helical segment. Over R116–S142 the chain is Extracellular. A glycan (N-linked (GlcNAc...) asparagine) is linked at N121. A helical transmembrane segment spans residues A143–L163. Topologically, residues A164–K169 are cytoplasmic. Residues F170–Y190 traverse the membrane as a helical segment. Over L191 to S192 the chain is Extracellular. Residues L193–Y213 traverse the membrane as a helical segment. Topologically, residues W214 to W241 are cytoplasmic. Residues F242–I262 form a helical membrane-spanning segment. The Extracellular portion of the chain corresponds to V263–N287. Residues A288–I308 form a helical membrane-spanning segment. At R309–S349 the chain is on the cytoplasmic side. A helical transmembrane segment spans residues F350 to L370. Residues R371–N385 are Extracellular-facing. Residues G386–A406 traverse the membrane as a helical segment. Residues R407 to N450 lie on the Cytoplasmic side of the membrane. A helical membrane pass occupies residues V451–Y471. Topologically, residues L472–N484 are extracellular. The chain crosses the membrane as a helical span at residues F485–T505. Over E506 to V553 the chain is Cytoplasmic.

It belongs to the CTL (choline transporter-like) family.

It is found in the cell membrane. Its function is as follows. Probably involved in transport through the plasma membrane. This is Protein PNS1 (PNS1) from Kluyveromyces lactis (strain ATCC 8585 / CBS 2359 / DSM 70799 / NBRC 1267 / NRRL Y-1140 / WM37) (Yeast).